A 258-amino-acid polypeptide reads, in one-letter code: Small ribosomal subunit protein uS2 (258 aa).

This sequence belongs to the universal ribosomal protein uS2 family.

The protein is Small ribosomal subunit protein uS2 of Streptococcus suis (strain 98HAH33).